Here is a 595-residue protein sequence, read N- to C-terminus: Fructan 1-exohydrolase (595 aa).

Residues 1 to 20 (MAQAWAFLLPLLVLGSYVTS) form the signal peptide. Asp74 is an active-site residue. Residues Asn167, Asn235, and Asn247 are each glycosylated (N-linked (GlcNAc...) asparagine). An intrachain disulfide couples Cys445 to Cys491. N-linked (GlcNAc...) asparagine glycosylation is present at Asn566.

Belongs to the glycosyl hydrolase 32 family.

It carries out the reaction Hydrolysis of terminal, non-reducing (2-&gt;1)-linked beta-D-fructofuranose residues in fructans.. With respect to regulation, inhibited by sucrose. Functionally, hydrolyzes inulin-type beta-(2,1)-fructans. May play a role as a beta-(2,1)-trimmer during graminan biosynthesis. This Aegilops speltoides (Goatgrass) protein is Fructan 1-exohydrolase.